The primary structure comprises 196 residues: Corrinoid adenosyltransferase (196 aa).

An ATP-binding site is contributed by 36–42 (GNGKGKT).

The protein belongs to the Cob(I)alamin adenosyltransferase family.

It is found in the cytoplasm. It catalyses the reaction 2 cob(II)yrinate a,c diamide + reduced [electron-transfer flavoprotein] + 2 ATP = 2 adenosylcob(III)yrinate a,c-diamide + 2 triphosphate + oxidized [electron-transfer flavoprotein] + 3 H(+). The enzyme catalyses 2 cob(II)alamin + reduced [electron-transfer flavoprotein] + 2 ATP = 2 adenosylcob(III)alamin + 2 triphosphate + oxidized [electron-transfer flavoprotein] + 3 H(+). It participates in cofactor biosynthesis; adenosylcobalamin biosynthesis; adenosylcobalamin from cob(II)yrinate a,c-diamide: step 2/7. Required for both de novo synthesis of the corrin ring for the assimilation of exogenous corrinoids. Participates in the adenosylation of a variety of incomplete and complete corrinoids. The polypeptide is Corrinoid adenosyltransferase (btuR) (Escherichia coli O6:H1 (strain CFT073 / ATCC 700928 / UPEC)).